Consider the following 310-residue polypeptide: tRNA dimethylallyltransferase (310 aa).

Gly-9–Thr-16 is an ATP binding site. Thr-11–Thr-16 is a substrate binding site. Residues Asp-34–Gln-37 form an interaction with substrate tRNA region.

It belongs to the IPP transferase family. Monomer. Mg(2+) is required as a cofactor.

It catalyses the reaction adenosine(37) in tRNA + dimethylallyl diphosphate = N(6)-dimethylallyladenosine(37) in tRNA + diphosphate. Its function is as follows. Catalyzes the transfer of a dimethylallyl group onto the adenine at position 37 in tRNAs that read codons beginning with uridine, leading to the formation of N6-(dimethylallyl)adenosine (i(6)A). This is tRNA dimethylallyltransferase from Syntrophomonas wolfei subsp. wolfei (strain DSM 2245B / Goettingen).